The primary structure comprises 474 residues: Aspartyl/glutamyl-tRNA(Asn/Gln) amidotransferase subunit B (474 aa).

Belongs to the GatB/GatE family. GatB subfamily. As to quaternary structure, heterotrimer of A, B and C subunits.

The catalysed reaction is L-glutamyl-tRNA(Gln) + L-glutamine + ATP + H2O = L-glutaminyl-tRNA(Gln) + L-glutamate + ADP + phosphate + H(+). The enzyme catalyses L-aspartyl-tRNA(Asn) + L-glutamine + ATP + H2O = L-asparaginyl-tRNA(Asn) + L-glutamate + ADP + phosphate + 2 H(+). Allows the formation of correctly charged Asn-tRNA(Asn) or Gln-tRNA(Gln) through the transamidation of misacylated Asp-tRNA(Asn) or Glu-tRNA(Gln) in organisms which lack either or both of asparaginyl-tRNA or glutaminyl-tRNA synthetases. The reaction takes place in the presence of glutamine and ATP through an activated phospho-Asp-tRNA(Asn) or phospho-Glu-tRNA(Gln). This is Aspartyl/glutamyl-tRNA(Asn/Gln) amidotransferase subunit B from Persephonella marina (strain DSM 14350 / EX-H1).